Consider the following 96-residue polypeptide: MNIKPLHDRVVVRQVEEQKESTGGILLPGSAQEKENLGEVVAVGPGKAADNGSIIPMTVKVGDKVMFGQYSGQEVKDDAGKPLKVMREDDIIAIVE.

The protein belongs to the GroES chaperonin family. In terms of assembly, heptamer of 7 subunits arranged in a ring. Interacts with the chaperonin GroEL.

It is found in the cytoplasm. Its function is as follows. Together with the chaperonin GroEL, plays an essential role in assisting protein folding. The GroEL-GroES system forms a nano-cage that allows encapsulation of the non-native substrate proteins and provides a physical environment optimized to promote and accelerate protein folding. GroES binds to the apical surface of the GroEL ring, thereby capping the opening of the GroEL channel. The protein is Co-chaperonin GroES of Hydrogenovibrio crunogenus (strain DSM 25203 / XCL-2) (Thiomicrospira crunogena).